Reading from the N-terminus, the 491-residue chain is UDP-N-acetylmuramoyl-L-alanyl-D-glutamate--2,6-diaminopimelate ligase (491 aa).

Residue serine 30 coordinates UDP-N-acetyl-alpha-D-muramoyl-L-alanyl-D-glutamate. 108 to 114 (GTNGKTT) is an ATP binding site. Residues asparagine 149, 150–151 (TT), serine 177, and arginine 185 each bind UDP-N-acetyl-alpha-D-muramoyl-L-alanyl-D-glutamate. N6-carboxylysine is present on lysine 217. Residues arginine 383, 407–410 (DNPR), glycine 457, and glutamate 461 each bind meso-2,6-diaminopimelate. The Meso-diaminopimelate recognition motif signature appears at 407–410 (DNPR).

Belongs to the MurCDEF family. MurE subfamily. Mg(2+) serves as cofactor. Post-translationally, carboxylation is probably crucial for Mg(2+) binding and, consequently, for the gamma-phosphate positioning of ATP.

The protein resides in the cytoplasm. It catalyses the reaction UDP-N-acetyl-alpha-D-muramoyl-L-alanyl-D-glutamate + meso-2,6-diaminopimelate + ATP = UDP-N-acetyl-alpha-D-muramoyl-L-alanyl-gamma-D-glutamyl-meso-2,6-diaminopimelate + ADP + phosphate + H(+). The protein operates within cell wall biogenesis; peptidoglycan biosynthesis. In terms of biological role, catalyzes the addition of meso-diaminopimelic acid to the nucleotide precursor UDP-N-acetylmuramoyl-L-alanyl-D-glutamate (UMAG) in the biosynthesis of bacterial cell-wall peptidoglycan. This Bacillus cereus (strain ATCC 14579 / DSM 31 / CCUG 7414 / JCM 2152 / NBRC 15305 / NCIMB 9373 / NCTC 2599 / NRRL B-3711) protein is UDP-N-acetylmuramoyl-L-alanyl-D-glutamate--2,6-diaminopimelate ligase.